The following is a 77-amino-acid chain: Acyl carrier protein (77 aa).

The region spanning M1–N76 is the Carrier domain. An O-(pantetheine 4'-phosphoryl)serine modification is found at S36.

It belongs to the acyl carrier protein (ACP) family. 4'-phosphopantetheine is transferred from CoA to a specific serine of apo-ACP by AcpS. This modification is essential for activity because fatty acids are bound in thioester linkage to the sulfhydryl of the prosthetic group.

The protein localises to the cytoplasm. The protein operates within lipid metabolism; fatty acid biosynthesis. Carrier of the growing fatty acid chain in fatty acid biosynthesis. The sequence is that of Acyl carrier protein from Actinobacillus pleuropneumoniae serotype 5b (strain L20).